A 245-amino-acid polypeptide reads, in one-letter code: Orotidine 5'-phosphate decarboxylase (245 aa).

Residues Asp-22, Lys-44, 71–80 (DLKFHDIPNT), Thr-131, Arg-192, Gln-201, Gly-221, and Arg-222 each bind substrate. The active-site Proton donor is the Lys-73.

The protein belongs to the OMP decarboxylase family. Type 1 subfamily. Homodimer.

It catalyses the reaction orotidine 5'-phosphate + H(+) = UMP + CO2. It functions in the pathway pyrimidine metabolism; UMP biosynthesis via de novo pathway; UMP from orotate: step 2/2. Catalyzes the decarboxylation of orotidine 5'-monophosphate (OMP) to uridine 5'-monophosphate (UMP). The chain is Orotidine 5'-phosphate decarboxylase from Escherichia coli (strain 55989 / EAEC).